A 1402-amino-acid polypeptide reads, in one-letter code: Nuclear pore complex protein Nup160 (1402 aa).

Phosphoserine is present on residues Ser10, Ser456, Ser915, and Ser1123.

As to quaternary structure, part of the nuclear pore complex (NPC). Forms part of the NUP160 subcomplex in the nuclear pore which is composed of NUP160, NUP133, NUP107 and NUP96. This complex plays a role in RNA export and in tethering NUP98 and NUP153 to the nucleus.

Its subcellular location is the nucleus. It is found in the nuclear pore complex. Functionally, functions as a component of the nuclear pore complex (NPC). Involved in poly(A)+ RNA transport. This Mus musculus (Mouse) protein is Nuclear pore complex protein Nup160 (Nup160).